Reading from the N-terminus, the 716-residue chain is Leucine-rich repeat neuronal protein 1 (716 aa).

An N-terminal signal peptide occupies residues 1–25 (MARMSFVLAAYQMVLSLLMTSLTGS). One can recognise an LRRNT domain in the interval 26-72 (SLQSSECPQLCVCEIRPWFTPQSTYREATTVDCNDLRLTRIPSNLSS). Over 26-631 (SLQSSECPQL…DISDQETSTA (606 aa)) the chain is Extracellular. N-linked (GlcNAc...) asparagine glycosylation is present at asparagine 69. 9 LRR repeats span residues 73–95 (DTQV…QQLF), 96–117 (NLTE…GLAN), 120–141 (QLTT…CLQD), 144–165 (NLQE…AFSG), 168–189 (NLLR…WFDS), 192–213 (NLEI…NFKP), 216–237 (NLRS…ALVG), 240–261 (SLES…ALQK), and 264–285 (NLKF…DFKN). Residues asparagine 96, asparagine 106, and asparagine 117 are each glycosylated (N-linked (GlcNAc...) asparagine). One can recognise an LRRCT domain in the interval 371–424 (NPLRCDCVIHWINSNKTNIRFMEPLSMFCAMPPEYRGQQVKEVLIQDSSEQCLP). A glycan (N-linked (GlcNAc...) asparagine) is linked at asparagine 385. The Ig-like C2-type domain maps to 424–515 (PMISHDTFPN…GADTRVVMIK (92 aa)). Cysteines 447 and 499 form a disulfide. Residues asparagine 517, asparagine 582, and asparagine 611 are each glycosylated (N-linked (GlcNAc...) asparagine). The region spanning 525 to 617 (QVLKIYVKQT…SCVNVTTKNA (93 aa)) is the Fibronectin type-III domain. Residues 632-652 (LAAVMGSMFAVISLASIAVYI) traverse the membrane as a helical segment. Residues 653-716 (AKRFKRKNYH…VDTSRSYYMW (64 aa)) lie on the Cytoplasmic side of the membrane. Basic and acidic residues predominate over residues 691–700 (DSEKDKDGTA). Positions 691–716 (DSEKDKDGTADTKPTQVDTSRSYYMW) are disordered. The span at 702–716 (TKPTQVDTSRSYYMW) shows a compositional bias: polar residues.

Its subcellular location is the membrane. This is Leucine-rich repeat neuronal protein 1 (LRRN1) from Bos taurus (Bovine).